A 670-amino-acid polypeptide reads, in one-letter code: MLKIPLQLSSQDGIWPARFARRLHHHHQLAYHHHKQEQQQQQQQQQQQQAKQKQKQNGVQQGRSPTFMPVMLLLLMATLLTRPLSAFSNRLSDTKLHEIYLDDKEIKLSWMVDWYKQEVLFHLQNAFNEQHRWFYLGFSKRGGLADADICFFENQNGFFNAVTDTYTSPDGQWVRRDYQQDCEVFKMDEFTLAFRRKFDTCDPLDLRLHEGTMYVVWARGETELALEDHQFALPNVTAPHEAGVKMLQLLRADKILIPETELDHMEITLQEAPIPSQETTYWCHVQRLEGNLRRRHHIVQFEPLIRTPGIVHHMEVFHCEAGEHEEIPLYNGDCEQLPPRAKICSKVMVLWAMGAGTFTYPPEAGLPIGGPGFNPYVRLEVHFNNPEKQSGLVDNSGFRIKMSKTLRQYDAAVMELGLEYTDKMAIPPGQTAFPLSGYCVADCTRAALPATGIIIFGSQLHTHLRGVRVLTRHFRGEQELREVNRDDYYSNHFQEMRTLHYKPRVLPGDALVTTCYYNTKDDKTAALGGFSISDEMCVNYIHYYPATKLEVCKSSVSEETLENYFIYMKRTEHQHGVHLNGARSSNYRSIEWTQPRIDQLYTMYMQEPLSMQCNRSDGTRFEGRSSWEGVAATPVQIRIPIHRKLCPNYNPLWLKPLEKGDCDLLGECIY.

The span at 26 to 35 (HHQLAYHHHK) shows a compositional bias: basic residues. Residues 26–63 (HHQLAYHHHKQEQQQQQQQQQQQQAKQKQKQNGVQQGR) are disordered. A compositionally biased stretch (low complexity) spans 38-61 (QQQQQQQQQQQQAKQKQKQNGVQQ). A helical membrane pass occupies residues 65–81 (PTFMPVMLLLLMATLLT). The DOMON domain occupies 104 to 220 (KEIKLSWMVD…GTMYVVWARG (117 aa)). Residue asparagine 235 is glycosylated (N-linked (GlcNAc...) asparagine). The active site involves tyrosine 281. 2 disulfides stabilise this stretch: cysteine 283–cysteine 334 and cysteine 319–cysteine 344. The Cu(2+) site is built by histidine 312 and histidine 313. Residues histidine 382, histidine 461, histidine 463, and methionine 536 each contribute to the Cu(2+) site. Disulfide bonds link cysteine 439/cysteine 552, cysteine 443/cysteine 613, and cysteine 515/cysteine 537. Residue histidine 461 is part of the active site. An N-linked (GlcNAc...) asparagine glycan is attached at asparagine 614.

The protein belongs to the copper type II ascorbate-dependent monooxygenase family. In terms of assembly, is most likely a monomer under physiological conditions, although under conditions of high pH and low ionic strength the dimeric form predominates. Both forms are equally active. It depends on Cu(2+) as a cofactor. Present in head and in neurons innervating the oviduct (at protein level).

The protein localises to the membrane. The enzyme catalyses tyramine + L-ascorbate + O2 = (R)-octopamine + L-dehydroascorbate + H2O. In terms of biological role, catalyzes the hydroxylation of tyramine into octopamine, a neurotransmitter involved in ovulation and locomotion. Functions in an amine-mediated Bacc-dependent signaling pathway that negatively regulates acute ethanol sensitivity. Involved in facilitation of nociceptive escape behavior in response to potentially damaging stimuli, such as high temperatures. This Drosophila melanogaster (Fruit fly) protein is Tyramine beta-hydroxylase (Tbh).